A 214-amino-acid chain; its full sequence is Histidine biosynthesis bifunctional protein HisIE (214 aa).

Positions 1–125 (MPATALSLPL…ESIEPPPADT (125 aa)) are phosphoribosyl-AMP cyclohydrolase. A phosphoribosyl-ATP pyrophosphohydrolase region spans residues 126-214 (LSQVYNIVCQ…VYEQLQLRRR (89 aa)).

This sequence in the N-terminal section; belongs to the PRA-CH family. The protein in the C-terminal section; belongs to the PRA-PH family.

The protein resides in the cytoplasm. It carries out the reaction 1-(5-phospho-beta-D-ribosyl)-ATP + H2O = 1-(5-phospho-beta-D-ribosyl)-5'-AMP + diphosphate + H(+). It catalyses the reaction 1-(5-phospho-beta-D-ribosyl)-5'-AMP + H2O = 1-(5-phospho-beta-D-ribosyl)-5-[(5-phospho-beta-D-ribosylamino)methylideneamino]imidazole-4-carboxamide. Its pathway is amino-acid biosynthesis; L-histidine biosynthesis; L-histidine from 5-phospho-alpha-D-ribose 1-diphosphate: step 2/9. It participates in amino-acid biosynthesis; L-histidine biosynthesis; L-histidine from 5-phospho-alpha-D-ribose 1-diphosphate: step 3/9. This Thermosynechococcus vestitus (strain NIES-2133 / IAM M-273 / BP-1) protein is Histidine biosynthesis bifunctional protein HisIE.